Consider the following 1055-residue polypeptide: MSESTNEDSGAGRSSLEENSNGQRSQSEEAIAEWRSSEQVENGTPSTSPPYWDIDDDDDFGSKPSQLFGKNTWTIEKFSDINKRELRGDVFEVGGYKWYILIYPQGCDVCNHLSLFLCVAHHEKLLPGWSHFAQFTIAVSNKDPKKSKHSDTLHRFWKKEHDWGWKKFIELPKLKEGFIDDSGCLTIKAQVQVIRERVDRPFRCLHYKYREELVRVYLGNVEQICWRFVEEKRSKLGRLIEDKAKWKSFCAFWMGLDQNSRRRMSREKMDVILKIVVKHFFVEKEVTSTLVMDSLYSGLKALEGQNKNKESRPRLMDTEESTAPIVSVDKDSFALVDDVLLLLEKAALEPLPKKEEKSSQNRTKDGNAGEEFSREAVERDDRRLTELGRRTVEIFVLAHIFSNKIEVAYQEAIAWKRQEELIREEEEAWLAESEQKGKRGASEKEKKSKKKQAKQKKNKNKGKEMRKEDKVRTQTEEREIEKEECVRAIAESSAEKPDTLGDVSDVSDSVDSSAEILQLDSEDRESSPVHWEMDASEVHPPSAGDTSRGRGNSFSIPNGVAERKGLSTMDDSSSTCSNDSIQSGVANGSYKGNVLNCQSQKWFSNGKIQPGKVSDSNSLASEKEHQPSRLASDPKNQSHSSDIRRVGEADIVISHIQKPESPKERSPVSKDPNMIQMKEKSAAVLSPSRAAPWNPPSPVQAKPEKKGVSNVEAVPNRKVISVKSPSSHHASPSREAQLQTVGPRADIQKIASPKPVEQPAPPMSRPLSAPIIPPTQAAPVISAVQTSTASLARSMSSTGRLGSPTHSQAYNPQSYKHAIVGSSGFTHPSSQSSGTSTLPPYSHPSPISVSNQSGFPINVGSWDVSSGGLLWTGGSSSTRDTTTTISGNHKTNTYNAPVVTTSIRPTNVQIGRTAQSLMTDEFPHLDIINDLLADEHGTMDNSVYRVPQQFNNQYSYHGGADLGISSRSRSYSDDGFHQSYGEYMPHSASSSPYGNGQTQSQWQMANMDFSLPAMRNQDDVSASATATYSYFDLDSSNPNLSGINGYRDFRPSNGH.

The tract at residues 1 to 56 is disordered; it reads MSESTNEDSGAGRSSLEENSNGQRSQSEEAIAEWRSSEQVENGTPSTSPPYWDIDD. Polar residues predominate over residues 37–46; the sequence is SEQVENGTPS. Positions 68–191 constitute an MATH domain; the sequence is FGKNTWTIEK…SGCLTIKAQV (124 aa). Disordered regions lie at residues 352–380, 431–590, 603–772, and 820–845; these read PKKE…VERD, AESE…NGSY, FSNG…APII, and VGSS…SHPS. The segment covering 433-446 has biased composition (basic and acidic residues); it reads SEQKGKRGASEKEK. Positions 441 to 496 form a coiled coil; that stretch reads ASEKEKKSKKKQAKQKKNKNKGKEMRKEDKVRTQTEEREIEKEECVRAIAESSAEK. Basic residues predominate over residues 447–460; the sequence is KSKKKQAKQKKNKN. The span at 461-486 shows a compositional bias: basic and acidic residues; that stretch reads KGKEMRKEDKVRTQTEEREIEKEECV. The span at 502-513 shows a compositional bias: low complexity; it reads DVSDVSDSVDSS. Basic and acidic residues predominate over residues 524-537; that stretch reads RESSPVHWEMDASE. Positions 569–586 are enriched in polar residues; it reads MDDSSSTCSNDSIQSGVA. The span at 657-668 shows a compositional bias: basic and acidic residues; sequence QKPESPKERSPV. Composition is skewed to polar residues over residues 723–740 and 823–845; these read KSPS…QLQT and SGFT…SHPS.

As to quaternary structure, interacts with AHK3. Interacts with ATG6, SINAT1, SINAT2, SINAT5 and SINAT6.

It is found in the cytoplasm. Its function is as follows. Functions redundantly with TRAF1B in the regulation of plant immune response. Contributes to the turnover of the nucleotide-binding domain and leucine-rich repeat-containing (NB-LRR) immune receptors SNC1 and RPS2. May associate with an E3 ubiquitin-protein ligase complex, which modulates ubiquitination and subsequent degradation of NB-LRR immune sensors to maintain their homeostasis. Functions redundantly with TRAF1B in the regulation of autophagosome formation. Required for SINAT1- and SINAT2-mediated ubiquitination and destabilization of ATG6. Functions as a molecular adapter that helps to regulate autophagy by modulating ATG6 stability. The protein is TNF receptor-associated factor homolog 1a of Arabidopsis thaliana (Mouse-ear cress).